A 352-amino-acid polypeptide reads, in one-letter code: Adenosine deaminase (352 aa).

His24 and His26 together coordinate Zn(2+). Residues His26, Asp28, and Gly181 each contribute to the substrate site. His208 contributes to the Zn(2+) binding site. Catalysis depends on Glu211, which acts as the Proton donor. A Zn(2+)-binding site is contributed by Asp290.

The protein belongs to the metallo-dependent hydrolases superfamily. Adenosine and AMP deaminases family. Adenosine deaminase subfamily. Requires Zn(2+) as cofactor.

The enzyme catalyses adenosine + H2O + H(+) = inosine + NH4(+). The catalysed reaction is 2'-deoxyadenosine + H2O + H(+) = 2'-deoxyinosine + NH4(+). Its function is as follows. Catalyzes the hydrolytic deamination of adenosine and 2-deoxyadenosine. This chain is Adenosine deaminase, found in Lactococcus lactis subsp. lactis (strain IL1403) (Streptococcus lactis).